The sequence spans 194 residues: uncharacterized protein (194 aa).

The segment covering glutamine 77 to threonine 92 has biased composition (polar residues). Residues glutamine 77 to aspartate 96 are disordered. A helical membrane pass occupies residues phenylalanine 169–leucine 189.

Its subcellular location is the host membrane. It localises to the virion. This is an uncharacterized protein from Acanthamoeba polyphaga (Amoeba).